The sequence spans 493 residues: Cysteine--tRNA ligase (493 aa).

Cysteine 31 serves as a coordination point for Zn(2+). Positions 33-43 (PTVYGDAHLGH) match the 'HIGH' region motif. Residues cysteine 226, histidine 251, and glutamate 255 each contribute to the Zn(2+) site. The 'KMSKS' region motif lies at 283–287 (KMGKS). Lysine 286 lines the ATP pocket.

The protein belongs to the class-I aminoacyl-tRNA synthetase family. As to quaternary structure, monomer. It depends on Zn(2+) as a cofactor.

Its subcellular location is the cytoplasm. The catalysed reaction is tRNA(Cys) + L-cysteine + ATP = L-cysteinyl-tRNA(Cys) + AMP + diphosphate. The protein is Cysteine--tRNA ligase of Phocaeicola vulgatus (strain ATCC 8482 / DSM 1447 / JCM 5826 / CCUG 4940 / NBRC 14291 / NCTC 11154) (Bacteroides vulgatus).